Consider the following 212-residue polypeptide: Thymidylate kinase (212 aa).

Residue 11–18 (GPEGAGKS) participates in ATP binding.

The protein belongs to the thymidylate kinase family.

The catalysed reaction is dTMP + ATP = dTDP + ADP. In terms of biological role, phosphorylation of dTMP to form dTDP in both de novo and salvage pathways of dTTP synthesis. The chain is Thymidylate kinase from Streptococcus sanguinis (strain SK36).